The following is a 248-amino-acid chain: MKSILNDFLLMIQFFTRIPINKNLQCEKVNFRRGAFFLPVVASIIGGMEFLIYLGLKNFLPPNVIIVLLLLFTAMITGGLHMDGLADTCDGFFSLRDKERIIEIMKDSRMGAFGTIAMIINLLLKYQLLYSLVLKDCSIAIILAPVIGRISILFLCLSKRTAKKNGSGNIFIGNMSKPIIFLITIIALAMNTYFLELKITIISFTAVLIITYLFYLLCLNKINGLTGDTLGACNELGEITFLLILLMM.

The next 6 membrane-spanning stretches (helical) occupy residues 36–56 (FFLP…YLGL), 59–79 (FLPP…ITGG), 113–133 (FGTI…YSLV), 137–157 (CSIA…FLCL), 170–190 (IFIG…ALAM), and 199–219 (ITII…LLCL).

The protein belongs to the CobS family. It depends on Mg(2+) as a cofactor.

The protein resides in the cell membrane. It carries out the reaction alpha-ribazole + adenosylcob(III)inamide-GDP = adenosylcob(III)alamin + GMP + H(+). The catalysed reaction is alpha-ribazole 5'-phosphate + adenosylcob(III)inamide-GDP = adenosylcob(III)alamin 5'-phosphate + GMP + H(+). It participates in cofactor biosynthesis; adenosylcobalamin biosynthesis; adenosylcobalamin from cob(II)yrinate a,c-diamide: step 7/7. Functionally, joins adenosylcobinamide-GDP and alpha-ribazole to generate adenosylcobalamin (Ado-cobalamin). Also synthesizes adenosylcobalamin 5'-phosphate from adenosylcobinamide-GDP and alpha-ribazole 5'-phosphate. The polypeptide is Adenosylcobinamide-GDP ribazoletransferase (Clostridium botulinum (strain 657 / Type Ba4)).